The sequence spans 375 residues: Queuine tRNA-ribosyltransferase (375 aa).

Aspartate 90 functions as the Proton acceptor in the catalytic mechanism. Residues 90–94 (DSGGF), aspartate 144, glutamine 193, and glycine 220 contribute to the substrate site. The tract at residues 251–257 (GVGTPED) is RNA binding. Catalysis depends on aspartate 270, which acts as the Nucleophile. The segment at 275–279 (TRNAR) is RNA binding; important for wobble base 34 recognition. Zn(2+) is bound by residues cysteine 308, cysteine 310, cysteine 313, and histidine 339.

The protein belongs to the queuine tRNA-ribosyltransferase family. In terms of assembly, homodimer. Within each dimer, one monomer is responsible for RNA recognition and catalysis, while the other monomer binds to the replacement base PreQ1. The cofactor is Zn(2+).

It carries out the reaction 7-aminomethyl-7-carbaguanine + guanosine(34) in tRNA = 7-aminomethyl-7-carbaguanosine(34) in tRNA + guanine. Its pathway is tRNA modification; tRNA-queuosine biosynthesis. Functionally, catalyzes the base-exchange of a guanine (G) residue with the queuine precursor 7-aminomethyl-7-deazaguanine (PreQ1) at position 34 (anticodon wobble position) in tRNAs with GU(N) anticodons (tRNA-Asp, -Asn, -His and -Tyr). Catalysis occurs through a double-displacement mechanism. The nucleophile active site attacks the C1' of nucleotide 34 to detach the guanine base from the RNA, forming a covalent enzyme-RNA intermediate. The proton acceptor active site deprotonates the incoming PreQ1, allowing a nucleophilic attack on the C1' of the ribose to form the product. After dissociation, two additional enzymatic reactions on the tRNA convert PreQ1 to queuine (Q), resulting in the hypermodified nucleoside queuosine (7-(((4,5-cis-dihydroxy-2-cyclopenten-1-yl)amino)methyl)-7-deazaguanosine). This chain is Queuine tRNA-ribosyltransferase, found in Methylibium petroleiphilum (strain ATCC BAA-1232 / LMG 22953 / PM1).